The sequence spans 456 residues: Chromosomal replication initiator protein DnaA (456 aa).

A domain I, interacts with DnaA modulators region spans residues 1-85; it reads MDADLNKLWE…EIKFIIESDL (85 aa). The interval 85 to 117 is domain II; the sequence is LNNEDELNNSDNSDKNRDKNSRRNIVVNDEMSS. The domain III, AAA+ region stretch occupies residues 118-334; the sequence is TLNPKYTFNS…GALIRIIAYS (217 aa). Gly162, Gly164, Lys165, and Thr166 together coordinate ATP. Residues 335–456 form a domain IV, binds dsDNA region; sequence SLTNREVTVD…SDITKKVSQN (122 aa).

The protein belongs to the DnaA family. In terms of assembly, oligomerizes as a right-handed, spiral filament on DNA at oriC.

The protein resides in the cytoplasm. In terms of biological role, plays an essential role in the initiation and regulation of chromosomal replication. ATP-DnaA binds to the origin of replication (oriC) to initiate formation of the DNA replication initiation complex once per cell cycle. Binds the DnaA box (a 9 base pair repeat at the origin) and separates the double-stranded (ds)DNA. Forms a right-handed helical filament on oriC DNA; dsDNA binds to the exterior of the filament while single-stranded (ss)DNA is stabiized in the filament's interior. The ATP-DnaA-oriC complex binds and stabilizes one strand of the AT-rich DNA unwinding element (DUE), permitting loading of DNA polymerase. After initiation quickly degrades to an ADP-DnaA complex that is not apt for DNA replication. Binds acidic phospholipids. The protein is Chromosomal replication initiator protein DnaA of Clostridium botulinum (strain Eklund 17B / Type B).